The primary structure comprises 512 residues: PTS system mannitol-specific EIICB component (512 aa).

Residues 1 to 28 are Cytoplasmic-facing; the sequence is MSQTEEKKGIGRRVQAFGSFLSSMIMPN. Residues 17–349 form the PTS EIIC type-2 domain; sequence FGSFLSSMIM…MKFTKEPKQD (333 aa). A helical membrane pass occupies residues 29 to 50; it reads IGAFIAWGFIAAIFIDNGWFPN. Topologically, residues 51 to 54 are extracellular; it reads KDLA. Residues 55–75 traverse the membrane as a helical segment; that stretch reads TLAGPMITYLIPLLIAFSGGR. Residues 76–139 are Cytoplasmic-facing; sequence LIYDLRGGII…QGFEMLFNNF (64 aa). Residues 140–161 form a helical membrane-spanning segment; that stretch reads SAGILGFIMTIAGFKILAPLMK. Residues 162 to 170 are Extracellular-facing; the sequence is FIMHILSVA. A helical transmembrane segment spans residues 171–191; sequence VEALVHAHLLPLVSILVEPAK. The Cytoplasmic segment spans residues 192–278; it reads IVFLNNAINH…VLMRPLLFIA (87 aa). Residues 279–298 form a helical membrane-spanning segment; that stretch reads VILGGMTGVATYQATGFGFK. Over 299-318 the chain is Extracellular; it reads SPASPGSFIVYCLNAPRGEF. Residues 319-340 traverse the membrane as a helical segment; that stretch reads LHMLLGVFLATLVSFVVAALIM. Residues 341–512 lie on the Cytoplasmic side of the membrane; the sequence is KFTKEPKQDL…LNNLKKDDQA (172 aa). Over residues 365–376 the composition is skewed to low complexity; it reads SSVASKLVSSDK. A disordered region spans residues 365–401; sequence SSVASKLVSSDKNVNTEENASGNVSETSSLDDDPEAL. A compositionally biased stretch (polar residues) spans 380–392; it reads TEENASGNVSETS. The PTS EIIB type-2 domain maps to 419 to 512; that stretch reads NHVIFACDAG…LNNLKKDDQA (94 aa). The Phosphocysteine intermediate; for EIIB activity role is filled by Cys-425. Cys-425 is subject to Phosphocysteine; by EIIA.

As to quaternary structure, homodimer.

The protein localises to the cell membrane. The catalysed reaction is D-mannitol(out) + N(pros)-phospho-L-histidyl-[protein] = D-mannitol 1-phosphate(in) + L-histidyl-[protein]. Functionally, the phosphoenolpyruvate-dependent sugar phosphotransferase system (sugar PTS), a major carbohydrate active transport system, catalyzes the phosphorylation of incoming sugar substrates concomitantly with their translocation across the cell membrane. The enzyme II CmtAB PTS system is involved in D-mannitol transport. In Staphylococcus aureus (strain MRSA252), this protein is PTS system mannitol-specific EIICB component (mtlA).